A 671-amino-acid chain; its full sequence is UvrABC system protein B (671 aa).

The Helicase ATP-binding domain occupies 25-412 (EGIDAGLAHQ…AGRIVEQVVR (388 aa)). 38–45 (GVTGSGKT) serves as a coordination point for ATP. The Beta-hairpin signature appears at 91 to 114 (YYDYYQPEAYVPSSDTFIEKDASI). The Helicase C-terminal domain maps to 429–582 (QVDDLLSEIH…QIAFNLEHGI (154 aa)). A disordered region spans residues 601-625 (PGSRSKKRKGMAKAAEESARYENEL). Basic and acidic residues predominate over residues 614–625 (AAEESARYENEL). Residues 632–667 (NKRIRQLEEKMYQLARDLEFEAAAQMRDEIGKLRER) form the UVR domain.

It belongs to the UvrB family. Forms a heterotetramer with UvrA during the search for lesions. Interacts with UvrC in an incision complex.

The protein resides in the cytoplasm. In terms of biological role, the UvrABC repair system catalyzes the recognition and processing of DNA lesions. A damage recognition complex composed of 2 UvrA and 2 UvrB subunits scans DNA for abnormalities. Upon binding of the UvrA(2)B(2) complex to a putative damaged site, the DNA wraps around one UvrB monomer. DNA wrap is dependent on ATP binding by UvrB and probably causes local melting of the DNA helix, facilitating insertion of UvrB beta-hairpin between the DNA strands. Then UvrB probes one DNA strand for the presence of a lesion. If a lesion is found the UvrA subunits dissociate and the UvrB-DNA preincision complex is formed. This complex is subsequently bound by UvrC and the second UvrB is released. If no lesion is found, the DNA wraps around the other UvrB subunit that will check the other stand for damage. The sequence is that of UvrABC system protein B from Pseudomonas syringae pv. tomato (strain ATCC BAA-871 / DC3000).